The following is a 511-amino-acid chain: Exodeoxyribonuclease 7 large subunit (511 aa).

Belongs to the XseA family. Heterooligomer composed of large and small subunits.

The protein localises to the cytoplasm. The enzyme catalyses Exonucleolytic cleavage in either 5'- to 3'- or 3'- to 5'-direction to yield nucleoside 5'-phosphates.. Functionally, bidirectionally degrades single-stranded DNA into large acid-insoluble oligonucleotides, which are then degraded further into small acid-soluble oligonucleotides. The chain is Exodeoxyribonuclease 7 large subunit from Brucella melitensis biotype 2 (strain ATCC 23457).